The following is a 301-amino-acid chain: N-acetylmuramic acid 6-phosphate etherase (301 aa).

In terms of domain architecture, SIS spans 57 to 220; that stretch reads IAETFMKNGR…TTGAMIKTGK (164 aa). Catalysis depends on Glu-85, which acts as the Proton donor. Glu-116 is an active-site residue.

This sequence belongs to the GCKR-like family. MurNAc-6-P etherase subfamily. In terms of assembly, homodimer.

It carries out the reaction N-acetyl-D-muramate 6-phosphate + H2O = N-acetyl-D-glucosamine 6-phosphate + (R)-lactate. Its pathway is amino-sugar metabolism; 1,6-anhydro-N-acetylmuramate degradation. The protein operates within amino-sugar metabolism; N-acetylmuramate degradation. It functions in the pathway cell wall biogenesis; peptidoglycan recycling. In terms of biological role, specifically catalyzes the cleavage of the D-lactyl ether substituent of MurNAc 6-phosphate, producing GlcNAc 6-phosphate and D-lactate. Together with AnmK, is also required for the utilization of anhydro-N-acetylmuramic acid (anhMurNAc) either imported from the medium or derived from its own cell wall murein, and thus plays a role in cell wall recycling. This Pasteurella multocida (strain Pm70) protein is N-acetylmuramic acid 6-phosphate etherase.